An 894-amino-acid polypeptide reads, in one-letter code: Translation factor GUF1 homolog, mitochondrial (894 aa).

The disordered stretch occupies residues 157–189 (EDEGLDGGPPPGMEAKKSSSSSSSNNVHSNCSD). Residues 174 to 188 (SSSSSSSNNVHSNCS) show a composition bias toward low complexity. The region spanning 199-376 (ENIRNFCILA…RIVSEIPSPA (178 aa)) is the tr-type G domain. GTP-binding positions include 208-215 (AHIDSGKS), 269-273 (DTPGH), and 323-326 (NKID). The interval 649–674 (DHDDCNDNGGSNSDDRSDRSGKNPPD) is disordered.

This sequence belongs to the TRAFAC class translation factor GTPase superfamily. Classic translation factor GTPase family. LepA subfamily.

Its subcellular location is the mitochondrion inner membrane. The enzyme catalyses GTP + H2O = GDP + phosphate + H(+). Functionally, promotes mitochondrial protein synthesis. May act as a fidelity factor of the translation reaction, by catalyzing a one-codon backward translocation of tRNAs on improperly translocated ribosomes. Binds to mitochondrial ribosomes in a GTP-dependent manner. This Plasmodium knowlesi (strain H) protein is Translation factor GUF1 homolog, mitochondrial.